Reading from the N-terminus, the 512-residue chain is MLSLKAFLALSLSIHLSQGLVASVSHRRANACTELSRSYPDSTIHPGSSVFAEDVIEPWSQTCQTTPTCVFAPASAEEVAGGLAILRKADQTFAVRTQGHMPIPGAADISNGVLMVTTSLNSVQYADDSKSVVQIGAGNRWLDVYKVLAKDNLAVVGGRFGQVGVSGLLLGGGISYFNSDHGWGANSVVNYEVVLANGTVCAANAQQNSDLYWALKGGSFNFGIVTRFDLATFSVPYMWGGSAFYDASALDPLVNAYASYAVASGGSSDPAAHSDPSILYNVTTGEVSGYGIYMHRGDDPAPAALKNFTDIPSTFQDFRVGKTILGLENDTTPVNFGVGNRRQLFSSTALASSAEAVYLVNQTFFDVIAANPQIKTTTDLSVTNTYQLFTPGMIRAAKASGGDPIGLYDPLGNGVLAVLYGGNWADAKDDEIIYKFFQDMIDELDNRAKKLGLYYDFVYLNDAAPTQTKDIFQKFSNGTALPKLREIAESYDPDQVFQTLTPGGFKLINSPA.

The signal sequence occupies residues 1-19 (MLSLKAFLALSLSIHLSQG). The region spanning 63-235 (CQTTPTCVFA…TRFDLATFSV (173 aa)) is the FAD-binding PCMH-type domain. Histidine 100 carries the post-translational modification Pros-8alpha-FAD histidine. Residues asparagine 197, asparagine 281, asparagine 307, asparagine 329, asparagine 361, and asparagine 477 are each glycosylated (N-linked (GlcNAc...) asparagine).

The protein belongs to the oxygen-dependent FAD-linked oxidoreductase family.

The protein operates within sesquiterpene biosynthesis. FAD-dependent monooxygenase; part of the gene cluster that mediates the biosynthesis of PR-toxin, a bicyclic sesquiterpene belonging to the eremophilane class and acting as a mycotoxin. The first step of the pathway is catalyzed by the aristolochene synthase which performs the cyclization of trans,trans-farnesyl diphosphate (FPP) to the bicyclic sesquiterpene aristolochene. Following the formation of aristolochene, the non-oxygenated aristolochene is converted to the trioxygenated intermediate eremofortin B, via 7-epi-neopetasone. This conversion appears to involve three enzymes, a hydroxysterol oxidase-like enzyme, the quinone-oxidase prx3 that forms the quinone-type-structure in the bicyclic nucleus of aristolochene with the C8-oxo group and the C-3 hydroxyl group, and the P450 monooxygenase ORF6 that introduces the epoxide at the double bond between carbons 1 and 2. No monoxy or dioxy-intermediates have been reported to be released to the broth, so these three early oxidative reactions may be coupled together. Eremofortin B is further oxidized by another P450 monooxygenase, that introduces a second epoxide between carbons 7 and 11 prior to acetylation to eremofortin A by the acetyltransferase ORF8. The second epoxidation may be performed by a second P450 monooxygenase. After the acetylation step, eremofortin A is converted to eremofortin C and then to PR-toxin. First the conversion of eremofortin A to eremofortin C proceeds by oxidation of the side chain of the molecule at C-12 and is catalyzed by the short-chain oxidoreductase prx1. The cytochrome P450 monooxygenase ORF6 is probably also involved in this step. The primary alcohol formed at C-12 is finally oxidized by the short-chain alcohol dehydrogenase prx4 that forms PR-toxin. The sequence is that of FAD-dependent monooxygenase prx3 from Penicillium roqueforti (strain FM164).